Consider the following 31-residue polypeptide: Cyclotide cter-R (31 aa).

Positions 1–31 (GIPCGESCVFIPCTVTALLGCSCKDKVCYKN) form a cross-link, cyclopeptide (Gly-Asn). Intrachain disulfides connect Cys4–Cys21, Cys8–Cys23, and Cys13–Cys28.

Post-translationally, this is a cyclic peptide.

The protein localises to the secreted. In terms of biological role, probably participates in a plant defense mechanism. This chain is Cyclotide cter-R, found in Clitoria ternatea (Butterfly pea).